The following is a 600-amino-acid chain: Pentatricopeptide repeat-containing protein At3g29230 (600 aa).

13 PPR repeats span residues 50-80, 81-115, 116-150, 151-183, 184-218, 219-245, 246-276, 279-313, 314-348, 349-379, 380-414, 415-445, and 451-481; these read DLHIAPKLISALSLCRQTNLAVRVFNQVQEP, NVHLCNSLIRAHAQNSQPYQAFFVFSEMQRFGLFA, DNFTYPFLLKACSGQSWLPVVKMMHNHIEKLGLSS, DIYVPNALIDCYSRCGGLGVRDAMKLFEKMSER, DTVSWNSMLGGLVKAGELRDARRLFDEMPQRDLIS, WNTMLDGYARCREMSKAFELFEKMPER, NTVSWSTMVMGYSKAGDMEMARVMFDKMPLP, NVVTWTIIIAGYAEKGLLKEADRLVDQMVASGLKF, DAAAVISILAACTESGLLSLGMRIHSILKRSNLGS, NAYVLNALLDMYAKCGNLKKAFDVFNDIPKK, DLVSWNTMLHGLGVHGHGKEAIELFSRMRREGIRP, DKVTFIAVLCSCNHAGLIDEGIDYFYSMEKV, and QVEHYGCLVDLLGRVGRLKEAIKVVQTMPME. The tract at residues 486-561 is type E motif; that stretch reads IWGALLGACR…PSGASSVELE (76 aa). Positions 562–592 are type E(+) motif; sequence DGIHEFTVFDKSHPKSDQIYQMLGSLIEPPD.

It belongs to the PPR family. PCMP-E subfamily.

This is Pentatricopeptide repeat-containing protein At3g29230 (PCMP-E27) from Arabidopsis thaliana (Mouse-ear cress).